The chain runs to 692 residues: Elongation factor G (692 aa).

The tr-type G domain occupies 8–282 (AKTRNIGIMA…AVIAYLPSPL (275 aa)). Residues 17-24 (AHVDAGKT), 81-85 (DTPGH), and 135-138 (NKMD) each bind GTP.

This sequence belongs to the TRAFAC class translation factor GTPase superfamily. Classic translation factor GTPase family. EF-G/EF-2 subfamily.

The protein resides in the cytoplasm. Functionally, catalyzes the GTP-dependent ribosomal translocation step during translation elongation. During this step, the ribosome changes from the pre-translocational (PRE) to the post-translocational (POST) state as the newly formed A-site-bound peptidyl-tRNA and P-site-bound deacylated tRNA move to the P and E sites, respectively. Catalyzes the coordinated movement of the two tRNA molecules, the mRNA and conformational changes in the ribosome. The chain is Elongation factor G from Streptococcus equi subsp. equi (strain 4047).